A 638-amino-acid chain; its full sequence is LIM domain kinase 2 (638 aa).

2 consecutive LIM zinc-binding domains span residues 12–63 and 72–124; these read CRGC…CHKD and CHGC…CGKC. In terms of domain architecture, PDZ spans 152 to 239; the sequence is LISMPATTEC…TLQLLIEHDP (88 aa). The residue at position 210 (Thr210) is a Phosphothreonine. Residues 255–304 form a disordered region; that stretch reads PHMQSTGHTLMLSTLDTKENQEGTLRRRSLRRSNSISKSPGPSSPKEPLL. Polar residues predominate over residues 257-269; it reads MQSTGHTLMLSTL. Positions 270 to 279 are enriched in basic and acidic residues; the sequence is DTKENQEGTL. Positions 286-304 are enriched in low complexity; sequence RSNSISKSPGPSSPKEPLL. Phosphoserine occurs at positions 293 and 298. Residues 331-608 form the Protein kinase domain; it reads LIHGEVLGKG…DSFEALSLFL (278 aa). ATP contacts are provided by residues 337–345 and Lys360; that span reads LGKGFFGQA. Asp451 is a catalytic residue. A Phosphothreonine; by ROCK1 and CDC42BP modification is found at Thr505.

It belongs to the protein kinase superfamily. TKL Ser/Thr protein kinase family. In terms of assembly, binds ROCK1 and MARF1. Interacts with NISCH. Post-translationally, phosphorylated on serine and/or threonine residues by ROCK1. As to expression, specifically expressed in the testes.

It is found in the cytoplasm. The protein localises to the cytoskeleton. The protein resides in the spindle. Its subcellular location is the microtubule organizing center. It localises to the centrosome. It is found in the nucleus. The protein localises to the perinuclear region. It carries out the reaction L-seryl-[protein] + ATP = O-phospho-L-seryl-[protein] + ADP + H(+). The enzyme catalyses L-threonyl-[protein] + ATP = O-phospho-L-threonyl-[protein] + ADP + H(+). In terms of biological role, serine/threonine-protein kinase that plays an essential role in the regulation of actin filament dynamics. Acts downstream of several Rho family GTPase signal transduction pathways. Involved in astral microtubule organization and mitotic spindle orientation during early stages of mitosis by mediating phosphorylation of TPPP. Displays serine/threonine-specific phosphorylation of myelin basic protein and histone (MBP) in vitro. Suppresses ciliogenesis via multiple pathways; phosphorylation of CFL1, suppression of directional trafficking of ciliary vesicles to the ciliary base, and by facilitating YAP1 nuclear localization where it acts as a transcriptional corepressor of the TEAD4 target genes AURKA and PLK1. The sequence is that of LIM domain kinase 2 (Limk2) from Mus musculus (Mouse).